The sequence spans 24 residues: Hyaluronidase (24 aa).

In terms of tissue distribution, expressed by the venom gland.

It localises to the secreted. The catalysed reaction is Random hydrolysis of (1-&gt;4)-linkages between N-acetyl-beta-D-glucosamine and D-glucuronate residues in hyaluronate.. Its function is as follows. Possesses high activity against hyaluronan in vitro. The sequence is that of Hyaluronidase from Tityus stigmurus (Brazilian scorpion).